Reading from the N-terminus, the 240-residue chain is Proteasome subunit alpha (240 aa).

It belongs to the peptidase T1A family. As to quaternary structure, the 20S proteasome core is composed of 14 alpha and 14 beta subunits that assemble into four stacked heptameric rings, resulting in a barrel-shaped structure. The two inner rings, each composed of seven catalytic beta subunits, are sandwiched by two outer rings, each composed of seven alpha subunits. The catalytic chamber with the active sites is on the inside of the barrel. Has a gated structure, the ends of the cylinder being occluded by the N-termini of the alpha-subunits. Is capped at one or both ends by the proteasome regulatory ATPase, PAN.

Its subcellular location is the cytoplasm. Its activity is regulated as follows. The formation of the proteasomal ATPase PAN-20S proteasome complex, via the docking of the C-termini of PAN into the intersubunit pockets in the alpha-rings, triggers opening of the gate for substrate entry. Interconversion between the open-gate and close-gate conformations leads to a dynamic regulation of the 20S proteasome proteolysis activity. Component of the proteasome core, a large protease complex with broad specificity involved in protein degradation. The sequence is that of Proteasome subunit alpha from Metallosphaera sedula (strain ATCC 51363 / DSM 5348 / JCM 9185 / NBRC 15509 / TH2).